We begin with the raw amino-acid sequence, 131 residues long: D-ribose pyranase (131 aa).

His20 serves as the catalytic Proton donor. Substrate-binding positions include Asp28, His98, and 120-122 (FSN).

Belongs to the RbsD / FucU family. RbsD subfamily. In terms of assembly, homodecamer.

The protein localises to the cytoplasm. It carries out the reaction beta-D-ribopyranose = beta-D-ribofuranose. It participates in carbohydrate metabolism; D-ribose degradation; D-ribose 5-phosphate from beta-D-ribopyranose: step 1/2. In terms of biological role, catalyzes the interconversion of beta-pyran and beta-furan forms of D-ribose. The polypeptide is D-ribose pyranase (Petrotoga mobilis (strain DSM 10674 / SJ95)).